A 230-amino-acid polypeptide reads, in one-letter code: Demethylmenaquinone methyltransferase (230 aa).

Residues T62, D80, 102–103 (DG), and S119 contribute to the S-adenosyl-L-methionine site.

This sequence belongs to the class I-like SAM-binding methyltransferase superfamily. MenG/UbiE family.

It catalyses the reaction a 2-demethylmenaquinol + S-adenosyl-L-methionine = a menaquinol + S-adenosyl-L-homocysteine + H(+). It participates in quinol/quinone metabolism; menaquinone biosynthesis; menaquinol from 1,4-dihydroxy-2-naphthoate: step 2/2. Methyltransferase required for the conversion of demethylmenaquinol (DMKH2) to menaquinol (MKH2). The protein is Demethylmenaquinone methyltransferase of Streptomyces griseus subsp. griseus (strain JCM 4626 / CBS 651.72 / NBRC 13350 / KCC S-0626 / ISP 5235).